A 548-amino-acid chain; its full sequence is 5-epi-aristolochene synthase 3 (548 aa).

Positions 301, 305, 444, 448, and 452 each coordinate Mg(2+). Positions 301-305 match the DDXXD motif motif; it reads DDTFD.

It belongs to the terpene synthase family. As to quaternary structure, monomer. Mg(2+) serves as cofactor. In terms of tissue distribution, expressed in roots, but not in shoots.

It localises to the cytoplasm. It carries out the reaction (2E,6E)-farnesyl diphosphate = (+)-5-epi-aristolochene + diphosphate. It participates in secondary metabolite biosynthesis; terpenoid biosynthesis. Its function is as follows. Catalyzes the cyclization of trans,trans-farnesyl diphosphate (FPP) to the bicyclic intermediate 5-epi-aristolochene, initial step in the conversion of FPP to the sesquiterpenoid antifungal phytoalexin capsidiol. Produces germacrene A as an enzyme-bound intermediate that is not released by the enzyme, but is further cyclized to produce the bicyclic 5-epi-aristolochene. This is 5-epi-aristolochene synthase 3 from Nicotiana attenuata (Coyote tobacco).